A 440-amino-acid chain; its full sequence is Argininosuccinate lyase (440 aa).

This sequence belongs to the lyase 1 family. Argininosuccinate lyase subfamily.

The protein localises to the cytoplasm. The enzyme catalyses 2-(N(omega)-L-arginino)succinate = fumarate + L-arginine. It participates in amino-acid biosynthesis; L-arginine biosynthesis; L-arginine from L-ornithine and carbamoyl phosphate: step 3/3. The protein is Argininosuccinate lyase of Clostridium botulinum (strain 657 / Type Ba4).